A 283-amino-acid polypeptide reads, in one-letter code: Protein FAM78A (283 aa).

This sequence belongs to the FAM78 family.

In Mus musculus (Mouse), this protein is Protein FAM78A (Fam78a).